Consider the following 331-residue polypeptide: uncharacterized protein (331 aa).

WD repeat units follow at residues 53–92, 97–139, 144–184, and 300–331; these read KAHTNITGIISCDQLNGVITCGSEGEIHLWDIRSQAKSAV, QQST…KLIR, AHND…DSTD, and ASEEICRAISFDVKNDVYYSGGEDGLLQAFRV.

The protein localises to the cytoplasm. It is found in the nucleus. This is an uncharacterized protein from Schizosaccharomyces pombe (strain 972 / ATCC 24843) (Fission yeast).